Here is a 168-residue protein sequence, read N- to C-terminus: MKDNLVCMGIITSPHGIKGAVKVKIFTEKPENISLYGKLISGSKNYDIDSVSVIGENLVIATINGVNSRNEAEFLRNKKLYVERNKLLKLNDENEFYQSDLVNMEIRLENDELYGYIKSIYNFGSGDILEISVISTKKNIMLPFTKEIFPYVNIKERYITLNMPEFIG.

The PRC barrel domain occupies 93-167 (ENEFYQSDLV…YITLNMPEFI (75 aa)).

The protein belongs to the RimM family. As to quaternary structure, binds ribosomal protein uS19.

The protein localises to the cytoplasm. In terms of biological role, an accessory protein needed during the final step in the assembly of 30S ribosomal subunit, possibly for assembly of the head region. Essential for efficient processing of 16S rRNA. May be needed both before and after RbfA during the maturation of 16S rRNA. It has affinity for free ribosomal 30S subunits but not for 70S ribosomes. This chain is Ribosome maturation factor RimM, found in Wolbachia sp. subsp. Brugia malayi (strain TRS).